We begin with the raw amino-acid sequence, 66 residues long: Small ribosomal subunit protein bS21 (66 aa).

The protein belongs to the bacterial ribosomal protein bS21 family.

This chain is Small ribosomal subunit protein bS21, found in Solidesulfovibrio magneticus (strain ATCC 700980 / DSM 13731 / RS-1) (Desulfovibrio magneticus).